The primary structure comprises 215 residues: Endoplasmic reticulum vesicle protein 25 (215 aa).

An N-terminal signal peptide occupies residues Met-1–Gly-21. Residues Leu-22–Lys-184 lie on the Lumenal side of the membrane. The GOLD domain maps to Pro-34–Ser-125. The helical transmembrane segment at Trp-185–Leu-205 threads the bilayer. Residues Arg-206–Ile-215 are Cytoplasmic-facing.

The protein belongs to the EMP24/GP25L family.

It localises to the endoplasmic reticulum membrane. It is found in the golgi apparatus membrane. Functionally, constituent of COPII-coated endoplasmic reticulum-derived transport vesicles. Required for efficient transport of a subset of secretory proteins to the Golgi. Facilitates retrograde transport from the Golgi to the endoplasmic reticulum. The polypeptide is Endoplasmic reticulum vesicle protein 25 (ERV25) (Candida albicans (strain SC5314 / ATCC MYA-2876) (Yeast)).